Reading from the N-terminus, the 277-residue chain is Sulfate transport system permease protein CysT (277 aa).

Transmembrane regions (helical) follow at residues 17-37 (LGTS…ALVM), 64-84 (LLAA…MAWI), 99-119 (LMDL…ASLF), 136-156 (VTYT…PFVV), 188-205 (VVLP…ALSF), 215-235 (VIFI…MIFV), and 243-263 (PAAS…LFSI). Residues 60–263 (YKVTLLAAFV…AASLLLLFSI (204 aa)) enclose the ABC transmembrane type-1 domain.

It belongs to the binding-protein-dependent transport system permease family. CysTW subfamily. In terms of assembly, the complex is composed of two ATP-binding proteins (CysA), two transmembrane proteins (CysT and CysW) and a solute-binding protein (CysP).

Its subcellular location is the cell inner membrane. In terms of biological role, part of the ABC transporter complex CysAWTP (TC 3.A.1.6.1) involved in sulfate/thiosulfate import. Probably responsible for the translocation of the substrate across the membrane. The sequence is that of Sulfate transport system permease protein CysT (cysU) from Salmonella typhimurium (strain LT2 / SGSC1412 / ATCC 700720).